We begin with the raw amino-acid sequence, 346 residues long: Peroxidase 38 (346 aa).

An N-terminal signal peptide occupies residues 1-22 (MHSSLIKLGFLLLLLQVSLSHA). A Pyrrolidone carboxylic acid modification is found at Q23. Cystine bridges form between C33–C113, C66–C71, C119–C323, and C199–C231. H64 (proton acceptor) is an active-site residue. The Ca(2+) site is built by D65, V68, G70, D72, and S74. A glycan (N-linked (GlcNAc...) asparagine) is linked at N79. P161 serves as a coordination point for substrate. Heme b is bound at residue H192. T193 is a Ca(2+) binding site. N-linked (GlcNAc...) asparagine glycosylation is present at N236. Residues D244, T247, and D252 each contribute to the Ca(2+) site.

The protein belongs to the peroxidase family. Classical plant (class III) peroxidase subfamily. Requires heme b as cofactor. Ca(2+) is required as a cofactor.

It localises to the secreted. It is found in the vacuole. It carries out the reaction 2 a phenolic donor + H2O2 = 2 a phenolic radical donor + 2 H2O. Its function is as follows. Removal of H(2)O(2), oxidation of toxic reductants, biosynthesis and degradation of lignin, suberization, auxin catabolism, response to environmental stresses such as wounding, pathogen attack and oxidative stress. These functions might be dependent on each isozyme/isoform in each plant tissue. The sequence is that of Peroxidase 38 (PER38) from Arabidopsis thaliana (Mouse-ear cress).